Reading from the N-terminus, the 412-residue chain is Docking protein 2 (412 aa).

The PH domain maps to 4–114 (GAVKQGFLYL…WVQAICLLAF (111 aa)). In terms of domain architecture, IRS-type PTB spans 147–252 (PHKEFAVTMR…SAQKNAAPAT (106 aa)). Residues 246 to 296 (KNAAPATPQPQPATIPASLPRPDSPYSRPHDSLPPPSPTTPVPAPRPRGQE) form a disordered region. Position 271 is a phosphotyrosine (Tyr-271). The span at 277-291 (SLPPPSPTTPVPAPR) shows a compositional bias: pro residues. 2 positions are modified to phosphotyrosine: Tyr-299 and Tyr-345. Positions 359–412 (SPQEPRGEAWRRQATADRDPAGLQHVQPAGQDFSASGWQPGTEYDNVVLKKGPK) are disordered. Residues 361-378 (QEPRGEAWRRQATADRDP) are compositionally biased toward basic and acidic residues.

Belongs to the DOK family. Type A subfamily. In terms of assembly, interacts with phosphorylated RASGAP and EGFR. Interacts with RET and NCK. Interacts (via PH domain) with TEK/TIE2 (tyrosine phosphorylated). (Microbial infection) Interacts with Herpes simplex virus 1 (HHV-1) protein UL46; this interaction induces DOK2 phosphorylation and subsequent degradation. On immunoreceptor stimulation, phosphorylated on C-terminal tyrosine residues. Phosphorylation on Tyr-345 is required for binding to the SH2 domain of NCK. Phosphorylation on both Tyr-271 and Tyr-299 is required for interaction with RASGAP. Phosphorylated on tyrosine residues by TEK/TIE2. As to expression, highly expressed in peripheral blood leukocytes, lymph nodes and spleen. Lower expression in thymus, bone marrow and fetal liver.

In terms of biological role, DOK proteins are enzymatically inert adaptor or scaffolding proteins. They provide a docking platform for the assembly of multimolecular signaling complexes. DOK2 may modulate the cellular proliferation induced by IL-4, as well as IL-2 and IL-3. May be involved in modulating Bcr-Abl signaling. Attenuates EGF-stimulated MAP kinase activation. The polypeptide is Docking protein 2 (DOK2) (Homo sapiens (Human)).